We begin with the raw amino-acid sequence, 311 residues long: Porphobilinogen deaminase (311 aa).

Cys243 bears the S-(dipyrrolylmethanemethyl)cysteine mark.

It belongs to the HMBS family. As to quaternary structure, monomer. Requires dipyrromethane as cofactor.

It catalyses the reaction 4 porphobilinogen + H2O = hydroxymethylbilane + 4 NH4(+). It participates in porphyrin-containing compound metabolism; protoporphyrin-IX biosynthesis; coproporphyrinogen-III from 5-aminolevulinate: step 2/4. Functionally, tetrapolymerization of the monopyrrole PBG into the hydroxymethylbilane pre-uroporphyrinogen in several discrete steps. The polypeptide is Porphobilinogen deaminase (Blochmanniella floridana).